The following is a 353-amino-acid chain: Thrombopoietin (353 aa).

Residues 1 to 21 (MELTELLLVVMLLLTARLTLS) form the signal peptide. Ser-22 is a glycosylation site (O-linked (GalNAc...) serine). 2 disulfides stabilise this stretch: Cys-28–Cys-172 and Cys-50–Cys-106. Thr-58, Thr-131, Thr-179, and Thr-180 each carry an O-linked (GalNAc...) threonine glycan. An O-linked (GalNAc...) serine glycan is attached at Ser-184. N-linked (GlcNAc...) (complex) asparagine glycans are attached at residues Asn-197 and Asn-206. O-linked (GalNAc...) threonine glycosylation occurs at Thr-213. Asn-234 and Asn-255 each carry an N-linked (GlcNAc...) (complex) asparagine glycan. The disordered stretch occupies residues 257–353 (TRGLFPGPSR…THSQNLSQEG (97 aa)). Ser-265 carries an O-linked (GalNAc...) serine glycan. A compositionally biased stretch (polar residues) spans 275 to 304 (SSGTSDTGSLPPNLQPGYSPSPTHPPTGQY). The span at 324-335 (LPDPSAPTPTPT) shows a compositional bias: pro residues. N-linked (GlcNAc...) asparagine glycans are attached at residues Asn-340 and Asn-348. A compositionally biased stretch (polar residues) spans 343 to 353 (YTHSQNLSQEG).

This sequence belongs to the EPO/TPO family. Interacts with MPL/TPOR.

It localises to the secreted. Lineage-specific cytokine affecting the proliferation and maturation of megakaryocytes from their committed progenitor cells. It acts at a late stage of megakaryocyte development. It may be the major physiological regulator of circulating platelets. The chain is Thrombopoietin (THPO) from Homo sapiens (Human).